The sequence spans 186 residues: Ribosome-recycling factor (186 aa).

The protein belongs to the RRF family.

The protein resides in the cytoplasm. Functionally, responsible for the release of ribosomes from messenger RNA at the termination of protein biosynthesis. May increase the efficiency of translation by recycling ribosomes from one round of translation to another. The protein is Ribosome-recycling factor of Rickettsia peacockii (strain Rustic).